We begin with the raw amino-acid sequence, 650 residues long: Flap endonuclease 1 (650 aa).

The interval 1–106 is N-domain; sequence MGIKGLTKFI…SELEKRGEKR (106 aa). Asp-34 provides a ligand contact to Mg(2+). DNA-binding residues include Arg-47 and Arg-72. Residues Asp-88, Glu-160, Glu-162, Asp-181, and Asp-183 each coordinate Mg(2+). Residues 124–266 form an I-domain region; sequence EIKKQSGRTV…KTAYNLIKEY (143 aa). Residue Glu-160 participates in DNA binding. 2 residues coordinate DNA: Gly-244 and Asp-246. Mg(2+) is bound at residue Asp-246. An interaction with PCNA region spans residues 349–357; the sequence is TQRRLDNFF. A disordered region spans residues 371-592; that stretch reads ETKKEQTLPA…NSYNNIKNNN (222 aa). Composition is skewed to basic and acidic residues over residues 413–469, 478–502, and 511–524; these read MKEE…KKSL, DSDK…EKIN, and DHSR…KDNI. A compositionally biased stretch (low complexity) spans 525-562; sequence SDINNNNNNNNNNSSSNNNNISNNHFNSVSSNSTFNSS. Positions 565 to 581 are enriched in basic and acidic residues; that stretch reads LKSEDTLKSNSPLKEDS. A compositionally biased stretch (low complexity) spans 582-592; that stretch reads PNSYNNIKNNN.

This sequence belongs to the XPG/RAD2 endonuclease family. FEN1 subfamily. As to quaternary structure, interacts with PCNA1 and PCNA2. Three molecules of FEN1 bind to one PCNA trimer with each molecule binding to one PCNA monomer. PCNA stimulates the nuclease activity without altering cleavage specificity. It depends on Mg(2+) as a cofactor. In terms of processing, phosphorylated. Phosphorylation upon DNA damage induces relocalization to the nuclear plasma.

Its subcellular location is the nucleus. It is found in the nucleolus. It localises to the nucleoplasm. The protein localises to the mitochondrion. Inhibited by monovalent metal ions. Structure-specific nuclease with 5'-flap endonuclease and 5'-3' exonuclease activities involved in DNA replication and repair. During DNA replication, cleaves the 5'-overhanging flap structure that is generated by displacement synthesis when DNA polymerase encounters the 5'-end of a downstream Okazaki fragment. It enters the flap from the 5'-end and then tracks to cleave the flap base, leaving a nick for ligation. Also involved in the long patch base excision repair (LP-BER) pathway, by cleaving within the apurinic/apyrimidinic (AP) site-terminated flap. Acts as a genome stabilization factor that prevents flaps from equilibrating into structures that lead to duplications and deletions. Also possesses 5'-3' exonuclease activity on nicked or gapped double-stranded DNA, and exhibits RNase H activity. Also involved in replication and repair of rDNA and in repairing mitochondrial DNA. The polypeptide is Flap endonuclease 1 (Plasmodium falciparum).